Reading from the N-terminus, the 343-residue chain is Biotin synthase (343 aa).

The Radical SAM core domain maps to 36–254; it reads RQVQVSTLLS…IAVARIMMPR (219 aa). Cysteine 51, cysteine 55, and cysteine 58 together coordinate [4Fe-4S] cluster. Positions 95, 126, 186, and 258 each coordinate [2Fe-2S] cluster.

It belongs to the radical SAM superfamily. Biotin synthase family. As to quaternary structure, homodimer. The cofactor is [4Fe-4S] cluster. Requires [2Fe-2S] cluster as cofactor.

The catalysed reaction is (4R,5S)-dethiobiotin + (sulfur carrier)-SH + 2 reduced [2Fe-2S]-[ferredoxin] + 2 S-adenosyl-L-methionine = (sulfur carrier)-H + biotin + 2 5'-deoxyadenosine + 2 L-methionine + 2 oxidized [2Fe-2S]-[ferredoxin]. It participates in cofactor biosynthesis; biotin biosynthesis; biotin from 7,8-diaminononanoate: step 2/2. Its function is as follows. Catalyzes the conversion of dethiobiotin (DTB) to biotin by the insertion of a sulfur atom into dethiobiotin via a radical-based mechanism. This Erwinia tasmaniensis (strain DSM 17950 / CFBP 7177 / CIP 109463 / NCPPB 4357 / Et1/99) protein is Biotin synthase.